The sequence spans 778 residues: Kin of IRRE-like protein 3 (778 aa).

Residues 1–21 form the signal peptide; the sequence is MKPFQLDLLFVCFFLFSQELG. The Extracellular portion of the chain corresponds to 22–535; that stretch reads LQKRGCCLVL…GLEAESVPMA (514 aa). 5 Ig-like C2-type domains span residues 48–142, 147–243, 249–330, 335–415, and 419–515; these read YSFS…ARLT, PDDP…TSVT, PPLV…RTVD, PRMT…VTLT, and PPII…IRLK. Cys-69 and Cys-127 are oxidised to a cystine. Asn-167 carries an N-linked (GlcNAc...) asparagine glycan. An intrachain disulfide couples Cys-170 to Cys-227. Asn-253 is a glycosylation site (N-linked (GlcNAc...) asparagine). The cysteines at positions 271 and 314 are disulfide-linked. The N-linked (GlcNAc...) asparagine glycan is linked to Asn-324. Disulfide bonds link Cys-356–Cys-398 and Cys-440–Cys-499. Asn-498 carries N-linked (GlcNAc...) asparagine glycosylation. The chain crosses the membrane as a helical span at residues 536-556; it reads VIIGVAVGAGVAFLVLMATIV. Over 557-778 the chain is Cytoplasmic; the sequence is AFCCARSQRN…PLQRRMQTHV (222 aa). The segment covering 727 to 736 has biased composition (polar residues); it reads CDSSVSSSGK. Positions 727-778 are disordered; sequence CDSSVSSSGKQDGYVQFDKASKASASSSHHSQSSSQNSDPSRPLQRRMQTHV. The segment covering 748–762 has biased composition (low complexity); the sequence is KASASSSHHSQSSSQ.

It belongs to the immunoglobulin superfamily. As to quaternary structure, homodimer; mediates homophilic interactions to promote cell adhesion. Interacts with NPHS1; forms heterodimers with NPHS1. Interacts with NPHS2/podocin (via the C-terminus). Interacts with CASK. Interacts (via extracellular region) with MAP1B. Interacts (via extracellular region) with MYO16. Interacts (via intracellular region) with ATP1B1. Interacts (via intracellular region) with SHMT2. Interacts (via intracellular region) with UFC1. Post-translationally, undergoes proteolysis by a metalloprotease and gives rise to a soluble form. In terms of tissue distribution, expressed in fetal and adult brain. Also expressed in kidney, specifically in podocytes of kidney glomeruli. Also expressed in skeletal muscle.

It is found in the cell membrane. The protein localises to the secreted. In terms of biological role, synaptic adhesion molecule required for the formation of target-specific synapses. Required for formation of target-specific synapses at hippocampal mossy fiber synapses. Required for formation of mossy fiber filopodia, the synaptic structures connecting dentate granule and GABA neurons. Probably acts as a homophilic adhesion molecule that promotes trans-cellular interactions and stabilize mossy fiber filipodia contact and subsequent synapse formation. Required for the coalescence of vomeronasal sensory neuron axons. May be involved in the hematopoietic supportive capacity of stroma cells; the secreted extracellular domain is directly responsible for supporting hematopoietic stem cells. The sequence is that of Kin of IRRE-like protein 3 from Homo sapiens (Human).